The following is a 548-amino-acid chain: Chaperonin GroEL (548 aa).

Residues 30–33, lysine 51, 87–91, glycine 415, 479–481, and aspartate 495 contribute to the ATP site; these read TLGP, DGTTT, and NAA. Positions 524–548 are disordered; it reads LPKEDKSSDSSSSPAGGMGGMGGMM. Gly residues predominate over residues 539–548; it reads GGMGGMGGMM.

The protein belongs to the chaperonin (HSP60) family. Forms a cylinder of 14 subunits composed of two heptameric rings stacked back-to-back. Interacts with the co-chaperonin GroES.

The protein localises to the cytoplasm. It carries out the reaction ATP + H2O + a folded polypeptide = ADP + phosphate + an unfolded polypeptide.. Functionally, together with its co-chaperonin GroES, plays an essential role in assisting protein folding. The GroEL-GroES system forms a nano-cage that allows encapsulation of the non-native substrate proteins and provides a physical environment optimized to promote and accelerate protein folding. This is Chaperonin GroEL from Buchnera aphidicola subsp. Acyrthosiphon pisum (strain Tuc7).